A 146-amino-acid chain; its full sequence is Large ribosomal subunit protein uL15 (146 aa).

A disordered region spans residues 1–56 (MKLHELRAAEGANKASKRVGRGTGSGLGKTSGRGQNGQNSRSGGGVRPGFEGGQMP). Composition is skewed to gly residues over residues 21–35 (RGTG…GRGQ) and 42–52 (SGGGVRPGFEG).

Belongs to the universal ribosomal protein uL15 family. In terms of assembly, part of the 50S ribosomal subunit.

Functionally, binds to the 23S rRNA. The chain is Large ribosomal subunit protein uL15 from Clostridium botulinum (strain Okra / Type B1).